Consider the following 507-residue polypeptide: ATP synthase subunit alpha, chloroplastic (507 aa).

ATP is bound at residue 170–177 (IGDRQTGK).

This sequence belongs to the ATPase alpha/beta chains family. As to quaternary structure, F-type ATPases have 2 components, CF(1) - the catalytic core - and CF(0) - the membrane proton channel. CF(1) has five subunits: alpha(3), beta(3), gamma(1), delta(1), epsilon(1). CF(0) has four main subunits: a, b, b' and c.

The protein resides in the plastid. It is found in the chloroplast thylakoid membrane. It catalyses the reaction ATP + H2O + 4 H(+)(in) = ADP + phosphate + 5 H(+)(out). Produces ATP from ADP in the presence of a proton gradient across the membrane. The alpha chain is a regulatory subunit. In Adiantum capillus-veneris (Maidenhair fern), this protein is ATP synthase subunit alpha, chloroplastic.